A 637-amino-acid chain; its full sequence is MGKIIGIDLGTTNSCVAVMQGTQPTVIENSEGNRTTPSMVAFTKTGDRLVGQAAKRQAITNPKNTIFSIKRFIGRKFDEVPNEKKIAPYEVVNEGGEARVKINDKTYSPQEVSAMILQKMKQTAEDFLGEKVTEAVITVPAYFNDAQRQATKDAGRIAGLEVKRIINEPTAAALAYGLDRKQTSEKVAVFDLGGGTFDISILELGDGVFEVKSTDGDTHLGGDDFDQKIIDFLADEFKKQEGVDLRNDAIALQRLKEAGEKAKVELSSRTDTEINLPFITATPEGPKHLVINLTRAKFEGMCSDLFDKILEPCRRAVKNSKVEMKDIDEIVLVGGSTRIPKVQALVKEFFGKEPNRSVNPDEVVAIGAAIQGGVLKGDVTDVLLLDVTPLSLGIETLGGVMTKLIDANTTIPTRKQEVFSTAGDNQTSVEVHVLQGERPLAVDNKTLGRFHLGDIPPAPRGMPQIEVTFDIDSNGILNVSAKDKATGKEQSIKIESSSKLTDAEVEKMKEDAKVHAEEDQKRKEEIEVKNSADSLIFSTEKQLSELGEKIPADKKPVIEGALEKLKDAHKNGTIESIKGAMDELSKVWGEVASNLYQAEAPGADAPEGQAPQDGGSKKGGEGAVENAEYEVIDGDGK.

Phosphothreonine; by autocatalysis is present on T196. The interval 598–637 (AEAPGADAPEGQAPQDGGSKKGGEGAVENAEYEVIDGDGK) is disordered. Acidic residues predominate over residues 627–637 (AEYEVIDGDGK).

This sequence belongs to the heat shock protein 70 family.

Acts as a chaperone. This chain is Chaperone protein DnaK, found in Chlorobium luteolum (strain DSM 273 / BCRC 81028 / 2530) (Pelodictyon luteolum).